The following is a 491-amino-acid chain: Glutamyl-tRNA(Gln) amidotransferase subunit A (491 aa).

Catalysis depends on charge relay system residues K79 and S154. Catalysis depends on S178, which acts as the Acyl-ester intermediate.

It belongs to the amidase family. GatA subfamily. In terms of assembly, heterotrimer of A, B and C subunits.

The enzyme catalyses L-glutamyl-tRNA(Gln) + L-glutamine + ATP + H2O = L-glutaminyl-tRNA(Gln) + L-glutamate + ADP + phosphate + H(+). In terms of biological role, allows the formation of correctly charged Gln-tRNA(Gln) through the transamidation of misacylated Glu-tRNA(Gln) in organisms which lack glutaminyl-tRNA synthetase. The reaction takes place in the presence of glutamine and ATP through an activated gamma-phospho-Glu-tRNA(Gln). The sequence is that of Glutamyl-tRNA(Gln) amidotransferase subunit A from Alkaliphilus metalliredigens (strain QYMF).